We begin with the raw amino-acid sequence, 1153 residues long: Reverse gyrase 2 (1153 aa).

The RG N-terminal-type zinc finger occupies 1-41; it reads MLKVNYLFGCPNCNGSISVDRLHAGIPCETCLPGAVEKLDI. 4 residues coordinate Zn(2+): Cys-10, Cys-13, Cys-28, and Cys-31. ATP-binding positions include Gln-86 and 103 to 110; that span reads APTGVGKT. One can recognise a Helicase ATP-binding domain in the interval 90–276; that stretch reads LNKLVRGESF…ALRFLVGFEP (187 aa). Positions 184-187 match the DEAD box motif; sequence DDAD. The interval 567–1153 is topoisomerase I; it reads MNFKTALLVV…VNPLQSEQYV (587 aa). A Toprim domain is found at 571 to 735; the sequence is TALLVVESPT…NIFRISYNEI (165 aa). Residue Glu-577 participates in Mg(2+) binding. An RG C-terminal-type zinc finger spans residues 654-681; that stretch reads LYRCMSCGKTITKKVSTCPYCGSSMINS. Zn(2+) contacts are provided by Cys-657, Cys-660, Cys-671, and Cys-674. A Mg(2+)-binding site is contributed by Asp-704. The region spanning 751-1142 is the Topo IA-type catalytic domain; sequence NESLVKAQIA…DLLNEIKNIK (392 aa). Catalysis depends on Tyr-894, which acts as the O-(5'-phospho-DNA)-tyrosine intermediate.

The protein in the N-terminal section; belongs to the DEAD box helicase family. DDVD subfamily. This sequence in the C-terminal section; belongs to the type IA topoisomerase family. In terms of assembly, monomer. Requires Zn(2+) as cofactor. Mg(2+) is required as a cofactor.

The protein resides in the cytoplasm. The enzyme catalyses ATP + H2O = ADP + phosphate + H(+). Functionally, modifies the topological state of DNA by introducing positive supercoils in an ATP-dependent process, increasing the linking number in steps of +1. Binds to single-stranded DNA, transiently cleaves and then rejoins the ends, introducing a positive supercoil in the process. The scissile phosphodiester is attacked by the catalytic tyrosine of the enzyme, resulting in the formation of a DNA-(5'-phosphotyrosyl)-enzyme intermediate. Probably involved in rewinding DNA strands in regions of the chromosome that have opened up to allow replication, transcription, DNA repair and/or for DNA protection. In terms of biological role, might be a cell cycle protein. The protein is Reverse gyrase 2 of Sulfolobus acidocaldarius (strain ATCC 33909 / DSM 639 / JCM 8929 / NBRC 15157 / NCIMB 11770).